Here is a 1336-residue protein sequence, read N- to C-terminus: Putative botulinum-like toxin Wo (1336 aa).

The tract at residues 1–476 (MDVLEMFDVN…VAGMQRMVSL (476 aa)) is has protease activity. Residue histidine 250 participates in Zn(2+) binding. The active site involves glutamate 251. 2 residues coordinate Zn(2+): histidine 254 and glutamate 296.

Belongs to the peptidase M27 family. The cofactor is Zn(2+).

The catalysed reaction is Limited hydrolysis of proteins of the neuroexocytosis apparatus, synaptobrevins, SNAP25 or syntaxin. No detected action on small molecule substrates.. With respect to regulation, inhibited by EDTA and 1,10-phenanthroline. In terms of biological role, when overexpressed the N-terminus (residues 1-476) cleaves rat synaptobrevin-2/VAMP2 between '89-Trp-|-Trp-90' in vitro. This releases the cytoplasmic domain of VAMP2 from the synaptic vesicle membrane, which would prevent the assembly of the trans-SNARE complex on the membrane and thus prevent vesicle-target membrane fusion and neurotransmitter release. The sequence is that of Putative botulinum-like toxin Wo from Weissella oryzae (strain DSM 25784 / JCM 18191 / LMG 30913 / SG25).